Reading from the N-terminus, the 72-residue chain is Translation initiation factor IF-1 (72 aa).

The S1-like domain maps to 1-72 (MAKDDVIEVE…TRGRITYRFK (72 aa)).

Belongs to the IF-1 family. Component of the 30S ribosomal translation pre-initiation complex which assembles on the 30S ribosome in the order IF-2 and IF-3, IF-1 and N-formylmethionyl-tRNA(fMet); mRNA recruitment can occur at any time during PIC assembly.

Its subcellular location is the cytoplasm. Its function is as follows. One of the essential components for the initiation of protein synthesis. Stabilizes the binding of IF-2 and IF-3 on the 30S subunit to which N-formylmethionyl-tRNA(fMet) subsequently binds. Helps modulate mRNA selection, yielding the 30S pre-initiation complex (PIC). Upon addition of the 50S ribosomal subunit IF-1, IF-2 and IF-3 are released leaving the mature 70S translation initiation complex. This Streptococcus gordonii (strain Challis / ATCC 35105 / BCRC 15272 / CH1 / DL1 / V288) protein is Translation initiation factor IF-1.